The following is a 276-amino-acid chain: Protein MGF 360-15R (276 aa).

The protein belongs to the asfivirus MGF 360 family.

In terms of biological role, plays a role in virus cell tropism, and may be required for efficient virus replication in macrophages. This chain is Protein MGF 360-15R, found in African swine fever virus (isolate Tick/South Africa/Pretoriuskop Pr4/1996) (ASFV).